Here is a 73-residue protein sequence, read N- to C-terminus: Salivary protein FS48 (73 aa).

Residues 1–21 (MKFAFAIFVVLAILHTELISA) form the signal peptide.

It is found in the secreted. Salivary protein that inhibits host voltage-gated potassium channels Kv1.1/KCNA1, Kv1.2/KCNA2 and Kv1.3/KCNA3 likely via a voltage-independent pore-blocking mechanism. Suppresses expression of the Kv1.3/KCNA3 channel in lipopolysaccharide (LPS)-stimulated mouse macrophages and human T-cells. Down-regulates secretion of nitric oxide (NO) and inflammatory cytokines, such as TNF-alpha/TNF, IL-1beta/IL1B and IL6, in LPS-stimulated mouse macrophages in a manner dependent on Kv1.3/KCNA3 channel blockage. Reduces activation of MAPK and NF-kappa-B signaling pathways in LPS-stimulated mouse macrophages. Modulates intracellular Ca(2+) signaling in human PMA/ionomycin-triggered T-cells. Interferes with the activation of the MAPK, NF-kappa-B and NFATc1 pathways in human PMA/ionomycin-triggered T-cells. Reduces proliferation of human PMA/ionomycin-triggered T-cells. Down-regulates secretion of cytokines, such as TNF-alpha/TNF and IL2, in human PMA/ionomycin-triggered T-cells. The protein is Salivary protein FS48 of Xenopsylla cheopis (Oriental rat flea).